We begin with the raw amino-acid sequence, 141 residues long: Protein MGF 100-2L (141 aa).

The protein belongs to the asfivirus MGF 100 family.

In terms of biological role, plays a role in virus cell tropism, and may be required for efficient virus replication in macrophages. This is Protein MGF 100-2L from African swine fever virus (isolate Tick/South Africa/Pretoriuskop Pr4/1996) (ASFV).